The following is an 89-amino-acid chain: Small ribosomal subunit protein uS15 (89 aa).

This sequence belongs to the universal ribosomal protein uS15 family. Part of the 30S ribosomal subunit. Forms a bridge to the 50S subunit in the 70S ribosome, contacting the 23S rRNA.

In terms of biological role, one of the primary rRNA binding proteins, it binds directly to 16S rRNA where it helps nucleate assembly of the platform of the 30S subunit by binding and bridging several RNA helices of the 16S rRNA. Forms an intersubunit bridge (bridge B4) with the 23S rRNA of the 50S subunit in the ribosome. The chain is Small ribosomal subunit protein uS15 from Chlorobium chlorochromatii (strain CaD3).